We begin with the raw amino-acid sequence, 362 residues long: Putative F-box protein At3g23260 (362 aa).

Residues M1–H46 form the F-box domain.

This Arabidopsis thaliana (Mouse-ear cress) protein is Putative F-box protein At3g23260.